A 340-amino-acid chain; its full sequence is Phosphate acyltransferase (340 aa).

This sequence belongs to the PlsX family. In terms of assembly, homodimer. Probably interacts with PlsY.

It localises to the cytoplasm. The catalysed reaction is a fatty acyl-[ACP] + phosphate = an acyl phosphate + holo-[ACP]. The protein operates within lipid metabolism; phospholipid metabolism. In terms of biological role, catalyzes the reversible formation of acyl-phosphate (acyl-PO(4)) from acyl-[acyl-carrier-protein] (acyl-ACP). This enzyme utilizes acyl-ACP as fatty acyl donor, but not acyl-CoA. This is Phosphate acyltransferase from Marinobacter nauticus (strain ATCC 700491 / DSM 11845 / VT8) (Marinobacter aquaeolei).